Consider the following 2285-residue polypeptide: AT-rich interactive domain-containing protein 1A (2285 aa).

Residues 1-14 are compositionally biased toward low complexity; it reads MAAQVAPAAASSLG. Disordered stretches follow at residues 1–820 and 978–1005; these read MAAQ…ALPN and ATKMNNKADGTPKTESKSKKSSSSTTTN. Position 2 is an N-acetylalanine (Ala-2). The segment covering 23–35 has biased composition (basic and acidic residues); the sequence is ELKKAEQQQREEA. Phosphoserine is present on residues Ser-58 and Ser-79. Composition is skewed to gly residues over residues 79-95 and 121-130; these read SNGGGGGGGAGSGGGPG and PGGGGGGSSD. Composition is skewed to low complexity over residues 131–142, 212–221, and 228–265; these read GVGAPPHSAAAA, YNSYYPNRSA, and AYALSSPRGGTPGSGAAAAAGSKPPPSSSASASSSSSS. Residue Ser-233 is modified to Phosphoserine. Gly residues predominate over residues 273 to 286; that stretch reads AMGGGGPSAAGGGT. Thr-286 is subject to Phosphothreonine. An LXXLL motif is present at residues 295–299; that stretch reads LNQLL. Positions 295 to 306 are enriched in polar residues; sequence LNQLLTSPSSAR. A Phosphoserine modification is found at Ser-301. Positions 310 to 327 are enriched in gly residues; that stretch reads GYPGGDYSGGPQDGGAGK. Residues 338-353 show a composition bias toward low complexity; sequence GAAAAAAAAAAASGGA. A phosphoserine mark is found at Ser-363 and Ser-382. Low complexity predominate over residues 400–425; the sequence is PYSQQQGPPSGPQQGHGYPGQPYGSQ. An Asymmetric dimethylarginine modification is found at Arg-429. Composition is skewed to low complexity over residues 447-457, 465-546, and 553-595; these read YTQQIPPYGQQ, QGQT…QHPQ, and QPQA…YSQQ. Phosphoserine is present on Ser-604. Positions 610 to 621 are enriched in low complexity; that stretch reads SQASSAPSMTSS. Positions 628-637 are enriched in polar residues; it reads MNLSLQSRPS. Over residues 658–674 the composition is skewed to low complexity; the sequence is SPGVSTSGISSSQGEQS. A compositionally biased stretch (polar residues) spans 675–685; sequence NPAQSPFSPHT. A phosphoserine mark is found at Ser-696, Ser-698, Ser-702, Ser-730, Ser-764, and Ser-772. 2 stretches are compositionally biased toward polar residues: residues 730–747 and 755–793; these read SGQSDSIMHPSMNQSSIA and RNPQMPQYSSPQPGSALSPRQPSGGQIHTGMGSYQQNSM. Gly residues predominate over residues 797-807; that stretch reads GPQGGQYGPQG. Over residues 808-820 the composition is skewed to low complexity; it reads GYPRQPNYNALPN. Residues 1017–1108 enclose the ARID domain; sequence EPERKMWVDR…CLYAFECKIE (92 aa). 2 disordered regions span residues 1113–1483 and 1539–1603; these read PPPD…MMGG and ANHE…SPSK. The span at 1141-1154 shows a compositional bias: low complexity; sequence MQGPQTPQSTSSSM. Residues 1162-1177 are compositionally biased toward pro residues; the sequence is PPTPASTPHSQIPPLP. Residue Ser-1184 is modified to Phosphoserine. The segment covering 1194-1219 has biased composition (polar residues); the sequence is GSDSTFQKRNSMTPNPGYQPSMNTSD. Residue Ser-1235 is modified to Phosphoserine. Position 1276 is an omega-N-methylarginine (Arg-1276). Polar residues-rich tracts occupy residues 1299–1315 and 1339–1356; these read NMSTGAPQPNLMPSNPD and YGNQFSTQGTPSGSPFPS. Residues 1357-1367 show a composition bias toward low complexity; that stretch reads QQTTMYQQQQQ. The Nuclear localization signal motif lies at 1368-1387; sequence NYKRPMDGTYGPPAKRHEGE. The segment covering 1396–1425 has biased composition (low complexity); that stretch reads GQGQPQQQQLPPAQPQPASQQQAAQPSPQQ. Residues 1468-1477 show a composition bias toward polar residues; it reads PGTNAQQNMP. The span at 1554-1577 shows a compositional bias: pro residues; the sequence is PYGPSAPVPPMTRPPPSNYQPPPS. Ser-1604 carries the post-translational modification Phosphoserine. N6-acetyllysine is present on Lys-1612. The LXXLL motif lies at 1709-1713; that stretch reads LPGLL. Disordered regions lie at residues 1747-1774 and 1859-1907; these read PGRFSKVSSPAPMEGGEEEEELLGPKLE and FESK…EKRI. 2 positions are modified to phosphoserine: Ser-1751 and Ser-1754. Residues 1761 to 1774 show a composition bias toward acidic residues; the sequence is GGEEEEELLGPKLE. The segment covering 1886–1895 has biased composition (low complexity); the sequence is EGTPGTTDQE. Residue Thr-1888 is modified to Phosphothreonine. N6-acetyllysine is present on Lys-1905. A phosphoserine mark is found at Ser-1929 and Ser-1944. 2 short sequence motifs (LXXLL) span residues 1967–1971 and 2085–2089; these read LCTLL and LDGLL.

As to quaternary structure, component of SWI/SNF chromatin remodeling complexes, in some of which it can be mutually exclusive with ARID1B/BAF250B. The canonical complex contains a catalytic subunit (either SMARCA4/BRG1/BAF190A or SMARCA2/BRM/BAF190B) and at least SMARCE1, ACTL6A/BAF53, SMARCC1/BAF155, SMARCC2/BAF170, and SMARCB1/SNF5/BAF47. Other subunits specific to each of the complexes may also be present permitting several possible combinations developmentally and tissue specific. Component of the BAF (SWI/SNF-A) complex, which includes at least actin (ACTB), ARID1A/BAF250A, ARID1B/BAF250B, SMARCA2/BRM, SMARCA4/BRG1/BAF190A, ACTL6A/BAF53, ACTL6B/BAF53B, SMARCE1/BAF57, SMARCC1/BAF155, SMARCC2/BAF170, SMARCB1/SNF5/INI1, and one or more SMARCD1/BAF60A, SMARCD2/BAF60B, or SMARCD3/BAF60C. In muscle cells, the BAF complex also contains DPF3. Component of neural progenitors-specific chromatin remodeling complex (npBAF complex) composed of at least, ARID1A/BAF250A or ARID1B/BAF250B, SMARCD1/BAF60A, SMARCD3/BAF60C, SMARCA2/BRM/BAF190B, SMARCA4/BRG1/BAF190A, SMARCB1/BAF47, SMARCC1/BAF155, SMARCE1/BAF57, SMARCC2/BAF170, PHF10/BAF45A, ACTL6A/BAF53A and actin. Component of neuron-specific chromatin remodeling complex (nBAF complex) composed of at least, ARID1A/BAF250A or ARID1B/BAF250B, SMARCD1/BAF60A, SMARCD3/BAF60C, SMARCA2/BRM/BAF190B, SMARCA4/BRG1/BAF190A, SMARCB1/BAF47, SMARCC1/BAF155, SMARCE1/BAF57, SMARCC2/BAF170, DPF1/BAF45B, DPF3/BAF45C, ACTL6B/BAF53B and actin. Component of a SWI/SNF-like EBAFa complex, at least composed of SMARCA4/BRG1/BAF190A, SMARCB1/BAF47/SNF5, ACTL6A/BAF53A, SMARCE1/BAF57, SMARCD1/BAF60A, SMARCC1/BAF155, SMARCC2/BAF170, BAF250A and MLLT1/ENL. Interacts through its C-terminus with SMARCA2/BRM/BAF190B and SMARCA4/BRG1/BAF190A. Interacts with SMARCC1/BAF155. Interacts with FOS, FOSB isoform 1 and 2, FOSL1 and FOSL2. In terms of tissue distribution, highly expressed in spleen, thymus, prostate, testis, ovary, small intestine, colon, and PBL, and at a much lower level in heart, brain, placenta, lung, liver, skeletal muscle, kidney, and pancreas.

It is found in the nucleus. In terms of biological role, involved in transcriptional activation and repression of select genes by chromatin remodeling (alteration of DNA-nucleosome topology). Component of SWI/SNF chromatin remodeling complexes that carry out key enzymatic activities, changing chromatin structure by altering DNA-histone contacts within a nucleosome in an ATP-dependent manner. Binds DNA non-specifically. Belongs to the neural progenitors-specific chromatin remodeling complex (npBAF complex) and the neuron-specific chromatin remodeling complex (nBAF complex). During neural development a switch from a stem/progenitor to a postmitotic chromatin remodeling mechanism occurs as neurons exit the cell cycle and become committed to their adult state. The transition from proliferating neural stem/progenitor cells to postmitotic neurons requires a switch in subunit composition of the npBAF and nBAF complexes. As neural progenitors exit mitosis and differentiate into neurons, npBAF complexes which contain ACTL6A/BAF53A and PHF10/BAF45A, are exchanged for homologous alternative ACTL6B/BAF53B and DPF1/BAF45B or DPF3/BAF45C subunits in neuron-specific complexes (nBAF). The npBAF complex is essential for the self-renewal/proliferative capacity of the multipotent neural stem cells. The nBAF complex along with CREST plays a role regulating the activity of genes essential for dendrite growth. The polypeptide is AT-rich interactive domain-containing protein 1A (ARID1A) (Homo sapiens (Human)).